A 455-amino-acid chain; its full sequence is Beta-1,3-galactosyl-O-glycosyl-glycoprotein beta-1,6-N-acetylglucosaminyltransferase 4 (455 aa).

Residues 1-13 (MKIFRCCFKYTLQ) lie on the Cytoplasmic side of the membrane. A helical; Signal-anchor for type II membrane protein membrane pass occupies residues 14–34 (QKLFILLLTLWLFSLLKLLNV). Topologically, residues 35–455 (GRLLFPQRDI…TEGTRQSHTL (421 aa)) are lumenal. A glycan (N-linked (GlcNAc...) asparagine) is linked at N73. Disulfide bonds link C74/C228, C162/C383, C183/C210, and C392/C424. N-linked (GlcNAc...) asparagine glycosylation is found at N287 and N382.

Belongs to the glycosyltransferase 14 family.

It localises to the golgi apparatus membrane. It carries out the reaction a 3-O-[beta-D-galactosyl-(1-&gt;3)-N-acetyl-alpha-D-galactosaminyl]-L-seryl-[protein] + UDP-N-acetyl-alpha-D-glucosamine = 3-O-{beta-D-galactosyl-(1-&gt;3)-[N-acetyl-beta-D-glucosaminyl-(1-&gt;6)]-N-acetyl-alpha-D-galactosaminyl}-L-seryl-[protein] + UDP + H(+). The catalysed reaction is a 3-O-[beta-D-galactosyl-(1-&gt;3)-N-acetyl-alpha-D-galactosaminyl]-L-threonyl-[protein] + UDP-N-acetyl-alpha-D-glucosamine = a 3-O-{beta-D-galactosyl-(1-&gt;3)-[N-acetyl-beta-D-glucosaminyl-(1-&gt;6)]-N-acetyl-alpha-D-galactosaminyl}-L-threonyl-[protein] + UDP + H(+). Its pathway is protein modification; protein glycosylation. In terms of biological role, glycosyltransferase that mediates core 2 O-glycan branching, an important step in mucin-type biosynthesis. Does not have core 4 O-glycan or I-branching enzyme activity. This is Beta-1,3-galactosyl-O-glycosyl-glycoprotein beta-1,6-N-acetylglucosaminyltransferase 4 (Gcnt4) from Mus musculus (Mouse).